Here is a 211-residue protein sequence, read N- to C-terminus: ATP-dependent Clp protease proteolytic subunit 2 (211 aa).

S106 serves as the catalytic Nucleophile. Residue H131 is part of the active site.

This sequence belongs to the peptidase S14 family. In terms of assembly, fourteen ClpP subunits assemble into 2 heptameric rings which stack back to back to give a disk-like structure with a central cavity, resembling the structure of eukaryotic proteasomes.

It localises to the cytoplasm. It carries out the reaction Hydrolysis of proteins to small peptides in the presence of ATP and magnesium. alpha-casein is the usual test substrate. In the absence of ATP, only oligopeptides shorter than five residues are hydrolyzed (such as succinyl-Leu-Tyr-|-NHMec, and Leu-Tyr-Leu-|-Tyr-Trp, in which cleavage of the -Tyr-|-Leu- and -Tyr-|-Trp bonds also occurs).. Cleaves peptides in various proteins in a process that requires ATP hydrolysis. Has a chymotrypsin-like activity. Plays a major role in the degradation of misfolded proteins. The protein is ATP-dependent Clp protease proteolytic subunit 2 of Bradyrhizobium diazoefficiens (strain JCM 10833 / BCRC 13528 / IAM 13628 / NBRC 14792 / USDA 110).